The sequence spans 254 residues: Vitamin B12 import ATP-binding protein BtuD (254 aa).

Residues 3–239 (INYISVGNRL…ENLQQVFETP (237 aa)) enclose the ABC transporter domain. An ATP-binding site is contributed by 29-36 (GPNGSGKS).

The protein belongs to the ABC transporter superfamily. Vitamin B12 importer (TC 3.A.1.13.1) family. As to quaternary structure, the complex is composed of two ATP-binding proteins (BtuD), two transmembrane proteins (BtuC) and a solute-binding protein (BtuF).

It localises to the cell inner membrane. It catalyses the reaction an R-cob(III)alamin(out) + ATP + H2O = an R-cob(III)alamin(in) + ADP + phosphate + H(+). Part of the ABC transporter complex BtuCDF involved in vitamin B12 import. Responsible for energy coupling to the transport system. The chain is Vitamin B12 import ATP-binding protein BtuD from Vibrio vulnificus (strain CMCP6).